Reading from the N-terminus, the 1016-residue chain is Probable outer membrane protein PmpH (1016 aa).

A signal peptide spans 1-24 (MPFSLRSTSFCFLACLCSYSYGFA). In terms of domain architecture, Autotransporter spans 697-1016 (GELVPNSLWV…FVSMGLNRIF (320 aa)).

The protein belongs to the PMP outer membrane protein family.

It localises to the secreted. The protein localises to the cell wall. Its subcellular location is the cell outer membrane. The sequence is that of Probable outer membrane protein PmpH (pmpH) from Chlamydia trachomatis serovar D (strain ATCC VR-885 / DSM 19411 / UW-3/Cx).